Reading from the N-terminus, the 180-residue chain is Large ribosomal subunit protein uL5 (180 aa).

Belongs to the universal ribosomal protein uL5 family. As to quaternary structure, part of the 50S ribosomal subunit; part of the 5S rRNA/L5/L18/L25 subcomplex. Contacts the 5S rRNA and the P site tRNA. Forms a bridge to the 30S subunit in the 70S ribosome.

This is one of the proteins that bind and probably mediate the attachment of the 5S RNA into the large ribosomal subunit, where it forms part of the central protuberance. In the 70S ribosome it contacts protein S13 of the 30S subunit (bridge B1b), connecting the 2 subunits; this bridge is implicated in subunit movement. Contacts the P site tRNA; the 5S rRNA and some of its associated proteins might help stabilize positioning of ribosome-bound tRNAs. This is Large ribosomal subunit protein uL5 from Streptococcus equi subsp. equi (strain 4047).